The sequence spans 429 residues: D-amino acid dehydrogenase 1 (429 aa).

3–17 (VLVLGSGVIGVTSAY) contributes to the FAD binding site.

This sequence belongs to the DadA oxidoreductase family. FAD serves as cofactor.

The catalysed reaction is a D-alpha-amino acid + A + H2O = a 2-oxocarboxylate + AH2 + NH4(+). Functionally, oxidative deamination of D-amino acids. The polypeptide is D-amino acid dehydrogenase 1 (dadA1) (Ralstonia nicotianae (strain ATCC BAA-1114 / GMI1000) (Ralstonia solanacearum)).